The following is a 165-amino-acid chain: Lipoprotein signal peptidase (165 aa).

5 consecutive transmembrane segments (helical) span residues 10 to 30 (LKWLWLSILIMLLDIGTKYWV), 42 to 62 (VLPGINCYYVCNPGLAFGLFT), 71 to 91 (LFVWIITLVIVAFIIALYKLI), 105 to 125 (IGGALGNLLDRILYGAVVDFI), and 133 to 153 (HWPTFNVADIAICIGITIVTI). Catalysis depends on residues D123 and D141.

Belongs to the peptidase A8 family.

Its subcellular location is the cell inner membrane. The enzyme catalyses Release of signal peptides from bacterial membrane prolipoproteins. Hydrolyzes -Xaa-Yaa-Zaa-|-(S,diacylglyceryl)Cys-, in which Xaa is hydrophobic (preferably Leu), and Yaa (Ala or Ser) and Zaa (Gly or Ala) have small, neutral side chains.. It participates in protein modification; lipoprotein biosynthesis (signal peptide cleavage). Its function is as follows. This protein specifically catalyzes the removal of signal peptides from prolipoproteins. This is Lipoprotein signal peptidase from Blochmanniella pennsylvanica (strain BPEN).